The chain runs to 215 residues: ATP phosphoribosyltransferase (215 aa).

Belongs to the ATP phosphoribosyltransferase family. Short subfamily. Heteromultimer composed of HisG and HisZ subunits.

The protein resides in the cytoplasm. The catalysed reaction is 1-(5-phospho-beta-D-ribosyl)-ATP + diphosphate = 5-phospho-alpha-D-ribose 1-diphosphate + ATP. It participates in amino-acid biosynthesis; L-histidine biosynthesis; L-histidine from 5-phospho-alpha-D-ribose 1-diphosphate: step 1/9. Its function is as follows. Catalyzes the condensation of ATP and 5-phosphoribose 1-diphosphate to form N'-(5'-phosphoribosyl)-ATP (PR-ATP). Has a crucial role in the pathway because the rate of histidine biosynthesis seems to be controlled primarily by regulation of HisG enzymatic activity. The polypeptide is ATP phosphoribosyltransferase (Prochlorococcus marinus subsp. pastoris (strain CCMP1986 / NIES-2087 / MED4)).